The sequence spans 114 residues: Cystatin Pr17a (114 aa).

The signal sequence occupies residues 1–18 (MSCLKIITLFLFLAAVIA). One can recognise a Cystatin domain in the interval 31-109 (GAPEQINPND…QAWLKKTSVK (79 aa)). Cysteine 93 and cysteine 113 are disulfide-bonded.

The protein belongs to the cystatin family. In terms of tissue distribution, expressed by the venom gland (posterior main gland) (at protein level).

It localises to the secreted. This Platymeris rhadamanthus (Red spot assassin bug) protein is Cystatin Pr17a.